The sequence spans 151 residues: Protein Smg homolog (151 aa).

This sequence belongs to the Smg family.

The protein is Protein Smg homolog of Laribacter hongkongensis (strain HLHK9).